The chain runs to 365 residues: MTTVNTDKRILIMAGGTGGHVFPALAVAKYLCQQGWQVRWLGTAERMEARLVPQHGFDIDFIDIKGVRGNGLLRKLAAPFKVIRSIMQAQAVIKEFKPDVVLGMGGFASGPGGVAARLSGLPLVLHEQNAIPGMTNKILARIASQVLCAFEDTFDNVEAEVVGNPIREELIALGDSNVDPVTDDALKVLVVGGSLGAKVFNDLMPSVTAAVSKTHSITVWHQVGKGNLQGVKAEYQHLGQDGSVNVAEFIDDMEAAYRWADVVLCRSGALTVSEVAAVGLPSLLVPYPHAVDDHQTKNAQVLVQAGGAFLLPQTILDANKLIGKLQILASDRNELAQMGLRAKSAAVLDATQKVASVCIRLAGKD.

Residues 17-19, Asn129, Arg167, Ser194, Ile250, 269-274, and Gln295 each bind UDP-N-acetyl-alpha-D-glucosamine; these read TGG and ALTVSE.

The protein belongs to the glycosyltransferase 28 family. MurG subfamily.

The protein resides in the cell inner membrane. The enzyme catalyses di-trans,octa-cis-undecaprenyl diphospho-N-acetyl-alpha-D-muramoyl-L-alanyl-D-glutamyl-meso-2,6-diaminopimeloyl-D-alanyl-D-alanine + UDP-N-acetyl-alpha-D-glucosamine = di-trans,octa-cis-undecaprenyl diphospho-[N-acetyl-alpha-D-glucosaminyl-(1-&gt;4)]-N-acetyl-alpha-D-muramoyl-L-alanyl-D-glutamyl-meso-2,6-diaminopimeloyl-D-alanyl-D-alanine + UDP + H(+). The protein operates within cell wall biogenesis; peptidoglycan biosynthesis. In terms of biological role, cell wall formation. Catalyzes the transfer of a GlcNAc subunit on undecaprenyl-pyrophosphoryl-MurNAc-pentapeptide (lipid intermediate I) to form undecaprenyl-pyrophosphoryl-MurNAc-(pentapeptide)GlcNAc (lipid intermediate II). This is UDP-N-acetylglucosamine--N-acetylmuramyl-(pentapeptide) pyrophosphoryl-undecaprenol N-acetylglucosamine transferase from Shewanella sediminis (strain HAW-EB3).